The following is a 95-amino-acid chain: Protein TusB (95 aa).

Belongs to the DsrH/TusB family. As to quaternary structure, heterohexamer, formed by a dimer of trimers. The hexameric TusBCD complex contains 2 copies each of TusB, TusC and TusD. The TusBCD complex interacts with TusE.

The protein localises to the cytoplasm. Its function is as follows. Part of a sulfur-relay system required for 2-thiolation of 5-methylaminomethyl-2-thiouridine (mnm(5)s(2)U) at tRNA wobble positions. This is Protein TusB from Escherichia coli (strain K12 / MC4100 / BW2952).